We begin with the raw amino-acid sequence, 554 residues long: Phenylalanine--tRNA ligase beta subunit (554 aa).

The B5 domain maps to 276-351 (LTPRYREISI…KNHGYEKFEG (76 aa)). Positions 329, 335, 338, and 339 each coordinate Mg(2+).

This sequence belongs to the phenylalanyl-tRNA synthetase beta subunit family. Type 2 subfamily. Tetramer of two alpha and two beta subunits. The cofactor is Mg(2+).

It is found in the cytoplasm. It catalyses the reaction tRNA(Phe) + L-phenylalanine + ATP = L-phenylalanyl-tRNA(Phe) + AMP + diphosphate + H(+). In Methanococcus vannielii (strain ATCC 35089 / DSM 1224 / JCM 13029 / OCM 148 / SB), this protein is Phenylalanine--tRNA ligase beta subunit.